A 138-amino-acid polypeptide reads, in one-letter code: Acidic phospholipase A2 1 (138 aa).

The N-terminal stretch at 1–16 (MRTLWIVAVWLMGVEG) is a signal peptide. Intrachain disulfides connect cysteine 42/cysteine 131, cysteine 44/cysteine 60, cysteine 59/cysteine 111, cysteine 65/cysteine 138, cysteine 66/cysteine 104, cysteine 73/cysteine 97, and cysteine 91/cysteine 102. The Ca(2+) site is built by tyrosine 43, glycine 45, and glycine 47. Histidine 63 is an active-site residue. Aspartate 64 is a Ca(2+) binding site. Residue aspartate 105 is part of the active site.

As to quaternary structure, monomer. Ca(2+) is required as a cofactor. In terms of tissue distribution, expressed by the venom gland.

Its subcellular location is the secreted. The catalysed reaction is a 1,2-diacyl-sn-glycero-3-phosphocholine + H2O = a 1-acyl-sn-glycero-3-phosphocholine + a fatty acid + H(+). In terms of biological role, snake venom phospholipase that inhibits ADP- and collagen-induced human platelet aggregation. This inhibition is completely inhibited by abolition of catalytic activity in case of collagen as inducer and partially inhibited in case of ADP as inducer. PLA2 catalyzes the calcium-dependent hydrolysis of the 2-acyl groups in 3-sn-phosphoglycerides. The chain is Acidic phospholipase A2 1 from Macrovipera lebetinus (Levantine viper).